The sequence spans 655 residues: SRSF protein kinase 1 (655 aa).

Residues 1 to 57 are disordered; that stretch reads MERKVLALQARKKRTKAKKDKAQRKPETQHRGSAPHSESDLPEQEEEILGSDDDEQE. Residues 10 to 22 are compositionally biased toward basic residues; it reads ARKKRTKAKKDKA. Over residues 40-57 the composition is skewed to acidic residues; that stretch reads DLPEQEEEILGSDDDEQE. A Phosphoserine; by CK2 modification is found at Ser-51. In terms of domain architecture, Protein kinase spans 80 to 653; sequence YHVIRKLGWG…AAECLRHPWL (574 aa). ATP is bound by residues 86-94 and Lys-109; that span reads LGWGHFSTV. The active-site Proton acceptor is Asp-213. 2 disordered regions span residues 238–341 and 397–417; these read WQRS…QDQT and FLSS…CTPI. Basic residues predominate over residues 265–276; that stretch reads KNKKKKLKKKQK. Basic and acidic residues-rich tracts occupy residues 277–288 and 304–318; these read RQAELLEKRMQE and NKQE…RPLK. Residues Ser-309, Ser-311, and Ser-333 each carry the phosphoserine modification. Phosphoserine; by CK2 is present on Ser-555.

Belongs to the protein kinase superfamily. CMGC Ser/Thr protein kinase family. Monomer. Found in a multisubunit complex containing seven proteins, named toposome, which separates entangled circular chromatin DNA during chromosome segregation. Interacts with HHV-1 ICP27 protein. Interacts with DNAJC8 and AHSA1/AHA1 and this mediates formation of a complex with the Hsp70 /Hsp90 machinery. Binds to IGF2BP1, SYNCRIP, HNRNPA2B1 and HNRNPC. Interacts with SAFB/SAFB1 and SAFB2 which inhibits its activity. Requires Mg(2+) as cofactor.

The protein localises to the cytoplasm. The protein resides in the nucleus. It is found in the nucleoplasm. Its subcellular location is the nucleus matrix. It localises to the microsome. The protein localises to the nucleus speckle. The protein resides in the chromosome. The enzyme catalyses L-seryl-[protein] + ATP = O-phospho-L-seryl-[protein] + ADP + H(+). It catalyses the reaction L-threonyl-[protein] + ATP = O-phospho-L-threonyl-[protein] + ADP + H(+). Activated by phosphorylation on Ser-51 and Ser-555. Its function is as follows. Serine/arginine-rich protein-specific kinase which specifically phosphorylates its substrates at serine residues located in regions rich in arginine/serine dipeptides, known as RS domains and is involved in the phosphorylation of SR splicing factors and the regulation of splicing. Plays a central role in the regulatory network for splicing, controlling the intranuclear distribution of splicing factors in interphase cells and the reorganization of nuclear speckles during mitosis. Can influence additional steps of mRNA maturation, as well as other cellular activities, such as chromatin reorganization in somatic and sperm cells and cell cycle progression. Phosphorylates SFRS2, ZRSR2, LBR and PRM1. Phosphorylates SRSF1 using a directional (C-terminal to N-terminal) and a dual-track mechanism incorporating both processive phosphorylation (in which the kinase stays attached to the substrate after each round of phosphorylation) and distributive phosphorylation steps (in which the kinase and substrate dissociate after each phosphorylation event). The RS domain of SRSF1 binds first to a docking groove in the large lobe of the kinase domain of SRPK1. This induces certain structural changes in SRPK1 and/or RRM2 domain of SRSF1, allowing RRM2 to bind the kinase and initiate phosphorylation. The cycles continue for several phosphorylation steps in a processive manner (steps 1-8) until the last few phosphorylation steps (approximately steps 9-12). During that time, a mechanical stress induces the unfolding of the beta-4 motif in RRM2, which then docks at the docking groove of SRPK1. This also signals RRM2 to begin to dissociate, which facilitates SRSF1 dissociation after phosphorylation is completed. Can mediate hepatitis B virus (HBV) core protein phosphorylation. It plays a negative role in the regulation of HBV replication through a mechanism not involving the phosphorylation of the core protein but by reducing the packaging efficiency of the pregenomic RNA (pgRNA) without affecting the formation of the viral core particles. Can induce splicing of exon 10 in MAPT/TAU. The sequence is that of SRSF protein kinase 1 from Pongo abelii (Sumatran orangutan).